The sequence spans 176 residues: Transmembrane protein 238 (176 aa).

Residues 1-21 form a disordered region; it reads MAAASPVCGSQASAVGASSPP. Over 1 to 36 the chain is Cytoplasmic; that stretch reads MAAASPVCGSQASAVGASSPPAPAPAPAAGLGRCRM. Positions 9-19 are enriched in low complexity; the sequence is GSQASAVGASS. The chain crosses the membrane as a helical span at residues 37–57; that stretch reads ALLLAVALDVAGMAALLTGVF. Over 58-69 the chain is Extracellular; it reads AQLQVRGRDFGD. A helical membrane pass occupies residues 70-90; it reads LLIYSGALLVFLSLLGWILWY. At 91-176 the chain is on the cytoplasmic side; it reads TGNIEISRQE…GSVAAGTGSE (86 aa). Residues 124 to 135 show a composition bias toward low complexity; that stretch reads SAPATASPRTTA. The segment at 124–156 is disordered; sequence SAPATASPRTTAGLRSARRANRAPQPSSSGSRR. The residue at position 175 (Ser175) is a Phosphoserine.

The protein localises to the membrane. This is Transmembrane protein 238 (Tmem238) from Mus musculus (Mouse).